Here is a 470-residue protein sequence, read N- to C-terminus: GTPase grn1 (470 aa).

Over residues 1–16 (MVSLKKKSKRRTTRLR) the composition is skewed to basic residues. The segment at 1–56 (MVSLKKKSKRRTTRLRSRIEKKAAESKRKQKRADKKNPQWKSRIPKDPGIPNSFPY) is disordered. Residues 17–27 (SRIEKKAAESK) are compositionally biased toward basic and acidic residues. The region spanning 153–333 (DKEFKKVVEA…LVDSPGIVFP (181 aa)) is the CP-type G domain. GTP is bound by residues 202 to 205 (NKID), 276 to 283 (GYPNVGKS), and 326 to 329 (DSPG). Positions 405–415 (ARKRGRLGRGG) are RNA-binding.

This sequence belongs to the TRAFAC class YlqF/YawG GTPase family.

It localises to the nucleus. It is found in the nucleolus. Functionally, required for optimal growth. Required for normal processing of ribosomal pre-rRNA. Required for nuclear export of ribosomal protein rpl2501. This is GTPase grn1 from Schizosaccharomyces pombe (strain 972 / ATCC 24843) (Fission yeast).